The following is a 139-amino-acid chain: D-ribose pyranase (139 aa).

His-20 functions as the Proton donor in the catalytic mechanism. Substrate contacts are provided by residues Asp-28, His-106, and 128 to 130 (YAN).

Belongs to the RbsD / FucU family. RbsD subfamily. As to quaternary structure, homodecamer.

Its subcellular location is the cytoplasm. The catalysed reaction is beta-D-ribopyranose = beta-D-ribofuranose. The protein operates within carbohydrate metabolism; D-ribose degradation; D-ribose 5-phosphate from beta-D-ribopyranose: step 1/2. In terms of biological role, catalyzes the interconversion of beta-pyran and beta-furan forms of D-ribose. The polypeptide is D-ribose pyranase (Vibrio campbellii (strain ATCC BAA-1116)).